The following is a 249-amino-acid chain: Segregation and condensation protein A (249 aa).

It belongs to the ScpA family. As to quaternary structure, component of a cohesin-like complex composed of ScpA, ScpB and the Smc homodimer, in which ScpA and ScpB bind to the head domain of Smc. The presence of the three proteins is required for the association of the complex with DNA.

The protein localises to the cytoplasm. Participates in chromosomal partition during cell division. May act via the formation of a condensin-like complex containing Smc and ScpB that pull DNA away from mid-cell into both cell halves. This chain is Segregation and condensation protein A, found in Mycoplasmopsis pulmonis (strain UAB CTIP) (Mycoplasma pulmonis).